We begin with the raw amino-acid sequence, 281 residues long: NADPH-dependent 7-cyano-7-deazaguanine reductase (281 aa).

A substrate-binding site is contributed by 87 to 89 (IES). 89 to 90 (SK) is an NADPH binding site. Cysteine 188 functions as the Thioimide intermediate in the catalytic mechanism. Aspartate 195 serves as the catalytic Proton donor. 227–228 (HE) serves as a coordination point for substrate. 256–257 (RG) serves as a coordination point for NADPH. The tract at residues 261–281 (INPYRSTEQAKPDHNHRMARQ) is disordered. Residues 268–281 (EQAKPDHNHRMARQ) are compositionally biased toward basic and acidic residues.

This sequence belongs to the GTP cyclohydrolase I family. QueF type 2 subfamily. Homodimer.

The protein localises to the cytoplasm. It carries out the reaction 7-aminomethyl-7-carbaguanine + 2 NADP(+) = 7-cyano-7-deazaguanine + 2 NADPH + 3 H(+). It functions in the pathway tRNA modification; tRNA-queuosine biosynthesis. Functionally, catalyzes the NADPH-dependent reduction of 7-cyano-7-deazaguanine (preQ0) to 7-aminomethyl-7-deazaguanine (preQ1). The polypeptide is NADPH-dependent 7-cyano-7-deazaguanine reductase (Vibrio vulnificus (strain YJ016)).